The primary structure comprises 1118 residues: Repetin (1118 aa).

Positions 1–91 are S-100-like; sequence MPQLLNSILN…VQACHHKLDS (91 aa). 2 consecutive EF-hand domains span residues 13-48 and 49-84; these read KVFQ…LRRP and NDPE…LVQA. Residues Ser27, Glu32, Asp62, Asp64, Asn66, Tyr68, and Glu73 each contribute to the Ca(2+) site. The tract at residues 94 to 1118 is disordered; that stretch reads YGSRTSSQKE…YVQEQAAYQY (1025 aa). Residues 100–115 show a composition bias toward basic and acidic residues; that stretch reads SQKEHDQEGTRSHKFS. Polar residues predominate over residues 138–148; the sequence is SEGQHQNVQHD. 2 stretches are compositionally biased toward basic and acidic residues: residues 149–164 and 172–186; these read QSQR…DTDP and FHGD…RQDT. The segment covering 237 to 252 has biased composition (low complexity); the sequence is GQSKTSGQQSSHGQSG. The span at 259–299 shows a compositional bias: polar residues; sequence YSSQTSQQESDSYEQYGSQHQKSGNSQTERQGQNSQYGQTN. 48 repeat units span residues 273–284, 285–296, 297–308, 309–320, 321–332, 333–344, 345–356, 357–368, 369–380, 381–392, 393–404, 405–416, 417–428, 429–440, 441–452, 453–464, 465–476, 477–488, 489–500, 501–512, 513–524, 525–536, 537–548, 549–560, 561–572, 573–584, 585–596, 597–608, 609–620, 621–632, 633–644, 645–656, 657–668, 669–680, 681–692, 693–704, 705–716, 717–728, 729–740, 741–752, 753–764, 765–776, 777–788, 789–800, 801–812, 813–824, 825–836, and 837–848. The segment at 273-848 is 48 X 12 AA approximate tandem repeats of Q-[KT]-[GD]-[RS]-Q-[DG]-Q-S-[PS]-H-X-G; the sequence is QYGSQHQKSG…DRQSQSSHCG (576 aa). Residues 321-764 are 22 X 12 AA approximate tandem repeats of Q-K-G-R-Q-D-Q-S-P-H-Q-G; sequence QKGRKDQSFQ…GRQDQSSHQG (444 aa). Composition is skewed to basic and acidic residues over residues 347–363 and 371–387; these read GRQD…RQDQ. A compositionally biased stretch (polar residues) spans 434–466; the sequence is DQSSHQGQKGRQDQSSHQGQKGRQDQSSHQGQK. Residues 467-481 are compositionally biased toward basic and acidic residues; that stretch reads GRQDQSSHQGQREGQ. Polar residues-rich tracts occupy residues 482–535 and 543–570; these read DQNS…SFHY and LSSH…QSFH. 2 stretches are compositionally biased toward polar residues: residues 587-606 and 616-643; these read DRQS…QSFH and GSHQ…SSQQ. The segment covering 710-726 has biased composition (polar residues); the sequence is DLSSHQGQKGRQDQSPH. Composition is skewed to basic and acidic residues over residues 731–747 and 755–769; these read GRHD…RQDQ and GRQD…REGQ. Polar residues-rich tracts occupy residues 795 to 822, 833 to 848, and 855 to 864; these read LSSH…QSFH, SHHG…SHCG, and TENQGQNRHS. Basic and acidic residues predominate over residues 865 to 875; that stretch reads LGTDRTRRDSY. The segment covering 876-889 has biased composition (polar residues); that stretch reads VEQSGRSVKLSQQN. 5 stretches are compositionally biased toward basic and acidic residues: residues 890–908, 947–965, 978–998, 1005–1045, and 1056–1065; these read SREE…RREQ, EQDH…HSVE, THEE…DEQN, QTHE…KEKY, and PNREKSHMSE.

Belongs to the S100-fused protein family. Potential substrate of transglutaminase. Some arginines are probably converted to citrullines by peptidylarginine deimidase. In terms of tissue distribution, detectable in the stratified internal epithelia of forestomach and tongue and to a lesser degree in normal skin epidermis, where it is restricted to the differentiated suprabasal cell layers. Overexpressed in skin tumors.

It localises to the secreted. The protein localises to the extracellular space. Its subcellular location is the extracellular matrix. In terms of biological role, involved in the cornified cell envelope formation. Multifunctional epidermal matrix protein. This is Repetin (Rptn) from Mus musculus (Mouse).